A 618-amino-acid polypeptide reads, in one-letter code: Transport protein particle subunit trs85-2 (618 aa).

It belongs to the TRS85 family. In terms of assembly, part of the multisubunit TRAPP (transport protein particle) complexes I and II.

The protein localises to the golgi apparatus. It localises to the cis-Golgi network. In terms of biological role, component of the TRAPP I and TRAPP II complexes. TRAPP I plays a key role in the late stages of endoplasmic reticulum to Golgi traffic. TRAPP II seems to play a role in intra-Golgi transport. Has a role late in meiosis following DNA replication. This Schizosaccharomyces pombe (strain 972 / ATCC 24843) (Fission yeast) protein is Transport protein particle subunit trs85-2 (trs85-2).